The following is a 315-amino-acid chain: Neuroguidin (315 aa).

A2 is modified (N-acetylalanine). Residues 7–41 (LESDVSSSITLLKNLQEQVMAVTAQIQALTTKVRA) are a coiled coil. A necessary for interaction with EIF4E region spans residues 41-174 (AGTYSTEKGL…KGSAKKYVPP (134 aa)). Phosphoserine is present on residues S121, S142, and S143. Residues 123–190 (SENDPLRFKP…YDETEAEREQ (68 aa)) are disordered. Residues 144-155 (EDEEESEAEEGQ) show a composition bias toward acidic residues. Residues 180–190 (HYDETEAEREQ) show a composition bias toward basic and acidic residues. The stretch at 181–203 (YDETEAEREQKRLEKAKRRALSS) forms a coiled coil. Phosphoserine occurs at positions 204 and 214. Basic and acidic residues-rich tracts occupy residues 212-225 (QYSD…DARH) and 232-241 (SQEDQHRVNY). Disordered regions lie at residues 212–243 (QYSD…NYEE) and 284–315 (GTAH…RRRW). Basic residues predominate over residues 295-315 (VKKRKKLPKKGRKKKGFRRRW).

This sequence belongs to the SAS10 family. In terms of assembly, interacts with CPEB1 and EIF4E. In terms of tissue distribution, expressed in testis, ovary, spleen, kidney, hippocampus and cerebellum (at protein level). Expressed in testis, ovary, spleen, kidney, brain.

The protein resides in the nucleus. It localises to the nucleolus. It is found in the chromosome. Its subcellular location is the centromere. The protein localises to the cytoplasm. The protein resides in the cell projection. It localises to the axon. It is found in the dendrite. Its subcellular location is the filopodium. Functionally, part of the small subunit (SSU) processome, first precursor of the small eukaryotic ribosomal subunit. During the assembly of the SSU processome in the nucleolus, many ribosome biogenesis factors, an RNA chaperone and ribosomal proteins associate with the nascent pre-rRNA and work in concert to generate RNA folding, modifications, rearrangements and cleavage as well as targeted degradation of pre-ribosomal RNA by the RNA exosome. Its dissociation from the complex determines the transition from state pre-A1 to state pre-A1*. Inhibits mRNA translation in a cytoplasmic polyadenylation element (CPE)-dependent manner. The protein is Neuroguidin (Ngdn) of Mus musculus (Mouse).